Consider the following 604-residue polypeptide: Glucoamylase 1 (604 aa).

The first 25 residues, 1 to 25 (MQLFNLPLKVSFFLVLSYFSLLVSA), serve as a signal peptide directing secretion. An adsorption to raw starch region spans residues 26-115 (ASIPSSASVQ…EFYIKYEVSG (90 aa)). In terms of domain architecture, CBM21 spans 26–130 (ASIPSSASVQ…NNNSANYQVS (105 aa)). Residues 116–604 (KTYYDNNNSA…SYAKAGAPAA (489 aa)) are starch degradation. N-linked (GlcNAc...) asparagine glycosylation occurs at N122. The interval 127 to 164 (YQVSTSKPTTTTATATTTTAPSTSTTTPPSRSEPATFP) is disordered. The segment covering 130–162 (STSKPTTTTATATTTTAPSTSTTTPPSRSEPAT) has biased composition (low complexity). N-linked (GlcNAc...) asparagine glycosylation is found at N167, N230, and N236. W279 provides a ligand contact to substrate. The active-site Proton acceptor is D336. E339 functions as the Proton donor in the catalytic mechanism. N564 carries an N-linked (GlcNAc...) asparagine glycan.

This sequence belongs to the glycosyl hydrolase 15 family.

It carries out the reaction Hydrolysis of terminal (1-&gt;4)-linked alpha-D-glucose residues successively from non-reducing ends of the chains with release of beta-D-glucose.. This is Glucoamylase 1 from Rhizopus oryzae (Mucormycosis agent).